A 362-amino-acid chain; its full sequence is Methylthioribose-1-phosphate isomerase (362 aa).

Asp-252 functions as the Proton donor in the catalytic mechanism.

This sequence belongs to the eIF-2B alpha/beta/delta subunits family. MtnA subfamily.

It localises to the cytoplasm. Its subcellular location is the nucleus. The catalysed reaction is 5-(methylsulfanyl)-alpha-D-ribose 1-phosphate = 5-(methylsulfanyl)-D-ribulose 1-phosphate. It functions in the pathway amino-acid biosynthesis; L-methionine biosynthesis via salvage pathway; L-methionine from S-methyl-5-thio-alpha-D-ribose 1-phosphate: step 1/6. Catalyzes the interconversion of methylthioribose-1-phosphate (MTR-1-P) into methylthioribulose-1-phosphate (MTRu-1-P). The protein is Methylthioribose-1-phosphate isomerase of Drosophila virilis (Fruit fly).